The sequence spans 26 residues: Potassium channel toxin alpha-KTx6 OcyKTx1 (26 aa).

The cysteines at positions 3 and 24 are disulfide-linked.

The protein belongs to the short scorpion toxin superfamily. Potassium channel inhibitor family. Alpha-KTx 06 subfamily. Expressed by the venom gland.

The protein resides in the secreted. Functionally, blocks voltage-gated potassium channels. The chain is Potassium channel toxin alpha-KTx6 OcyKTx1 from Opisthacanthus cayaporum (South American scorpion).